Consider the following 102-residue polypeptide: MVIGLSHYLTVSAILFTLGVFGIFLNRKNVIVILMSVELILLAVNINMVAFSSFLNDIVGQVFALFILTVAAAEAAIGLAILVVFYRNRGSIAVEDVNMMKG.

Helical transmembrane passes span 5–25 (LSHY…GIFL), 31–51 (IVIL…MVAF), and 65–85 (LFIL…LVVF).

It belongs to the complex I subunit 4L family. In terms of assembly, NDH-1 is composed of 14 different subunits. Subunits NuoA, H, J, K, L, M, N constitute the membrane sector of the complex.

The protein localises to the cell inner membrane. The enzyme catalyses a quinone + NADH + 5 H(+)(in) = a quinol + NAD(+) + 4 H(+)(out). In terms of biological role, NDH-1 shuttles electrons from NADH, via FMN and iron-sulfur (Fe-S) centers, to quinones in the respiratory chain. The immediate electron acceptor for the enzyme in this species is believed to be ubiquinone. Couples the redox reaction to proton translocation (for every two electrons transferred, four hydrogen ions are translocated across the cytoplasmic membrane), and thus conserves the redox energy in a proton gradient. This is NADH-quinone oxidoreductase subunit K from Rhizobium leguminosarum bv. trifolii (strain WSM2304).